The sequence spans 625 residues: Mesothelin (625 aa).

The first 35 residues, 1–35, serve as a signal peptide directing secretion; it reads MALPTARPLLGSCGSPICSRSFLLLLLSLGWIPRL. The N-linked (GlcNAc...) asparagine glycan is linked to asparagine 93. At serine 202 the chain carries Phosphoserine. Cysteine 304 and cysteine 328 are disulfide-bonded. 3 N-linked (GlcNAc...) asparagine glycosylation sites follow: asparagine 390, asparagine 488, and asparagine 517. Serine 600 is lipidated: GPI-anchor amidated serine. Positions 601–625 are cleaved as a propeptide — removed in mature form; it reads SRASLLGPGFVLIWIPALLPALRLS.

This sequence belongs to the mesothelin family. In terms of assembly, interacts with MUC16. Proteolytically cleaved by a furin-like convertase to generate megakaryocyte-potentiating factor (MPF), and the cleaved form of mesothelin. Highly expressed in lung and heart. Expressed at low levels in spleen, liver, kidney and testis. Present in lung (at protein level).

Its subcellular location is the cell membrane. The protein resides in the golgi apparatus. It localises to the secreted. Functionally, membrane-anchored forms may play a role in cellular adhesion. Megakaryocyte-potentiating factor (MPF) may potentiate megakaryocyte colony formation. In Mus musculus (Mouse), this protein is Mesothelin (Msln).